Here is a 436-residue protein sequence, read N- to C-terminus: Adenine nucleotide transporter BT1, chloroplastic/amyloplastic/mitochondrial (436 aa).

Positions 83-135 (ASLAPPFPGSRPPGRRGRGSEEEEAEGRRHEEAAAAGRSEPEEGQGQDRQPAP) are disordered. Solcar repeat units lie at residues 132–216 (QPAP…AKKF), 227–311 (IPIP…LKRL), and 324–412 (VGPV…CKKI). 6 helical membrane-spanning segments follow: residues 137-158 (RLVSGAIAGAVSRTFVAPLETI), 193-213 (AVNVLRVAPSKAIEHFTYDTA), 229-247 (IPTPLVAGALAGFASTLCT), 290-310 (SLIGVVPYAACNFYAYETLKR), 327-347 (VATLLIGSAAGAIASSATFPL), and 384-405 (LYRGLGPSCIKLMPAAGIAFMC). Residues 417 to 428 (EDEEEEDEAGGG) show a composition bias toward acidic residues. The interval 417–436 (EDEEEEDEAGGGEDDKKKVE) is disordered.

It belongs to the mitochondrial carrier (TC 2.A.29) family. In terms of tissue distribution, highly expressed in silks and endosperm of developing kernels. Expressed at intermediate levels in tassels and lower levels in stems and leaves.

The protein resides in the plastid. It localises to the chloroplast inner membrane. It is found in the amyloplast inner membrane. Its subcellular location is the mitochondrion inner membrane. Its activity is regulated as follows. Inhibited by mersalyl. In terms of biological role, probable adenylate translocator that mediates transport of ADP-glucose into endosperm storage plastids during starch synthesis. Transports cytosolic ADP-glucose to amyloplast stroma by counter-exchange with ADP. The protein is Adenine nucleotide transporter BT1, chloroplastic/amyloplastic/mitochondrial (BT1) of Zea mays (Maize).